The following is a 632-amino-acid chain: tRNA uridine 5-carboxymethylaminomethyl modification enzyme MnmG (632 aa).

Residues 16–21, Val128, and Ser183 each bind FAD; that span reads GAGHAG. Positions 206 to 225 are disordered; it reads PRVNGNTIDYSKTEEEPGDK. Over residues 216–225 the composition is skewed to basic and acidic residues; it reads SKTEEEPGDK. 277-291 is a binding site for NAD(+); the sequence is GPRYCPSIEDKVVRF. Gln374 contacts FAD.

This sequence belongs to the MnmG family. Homodimer. Heterotetramer of two MnmE and two MnmG subunits. The cofactor is FAD.

Its subcellular location is the cytoplasm. Functionally, NAD-binding protein involved in the addition of a carboxymethylaminomethyl (cmnm) group at the wobble position (U34) of certain tRNAs, forming tRNA-cmnm(5)s(2)U34. The chain is tRNA uridine 5-carboxymethylaminomethyl modification enzyme MnmG from Lactobacillus acidophilus (strain ATCC 700396 / NCK56 / N2 / NCFM).